The primary structure comprises 347 residues: Leucine-rich repeat-containing protein 69 (347 aa).

LRR repeat units follow at residues 15 to 37, 38 to 60, 61 to 82, 84 to 105, 108 to 129, 131 to 152, 154 to 175, 177 to 198, and 200 to 222; these read NTKILTLNGKRITKMPSTLEKLP, NLKTLDLQNNSISKVCPELRTLT, QLTLLNLGNNHLQEVPEEIKYL, SLKNLHLFGNRICRIAPGVFNG, RLIMLNLNDNRLTSLPQEIGRL, SLTYLSLNRNNLTVIPKELCSL, HLSELHLNYNQIVYIPEEIKFL, NLQQLFLVRNNIEELPEEICHL, and KLRVLDIAGNVIQIFPAGFQNLR.

The protein belongs to the LRRC69 family.

The polypeptide is Leucine-rich repeat-containing protein 69 (Lrrc69) (Mus musculus (Mouse)).